Reading from the N-terminus, the 145-residue chain is Hemoglobin fetal subunit beta (145 aa).

The Globin domain occupies 1–145 (MLSAEEKAAV…VANALAHRYH (145 aa)). 2 residues coordinate heme b: His62 and His91.

Belongs to the globin family. As to quaternary structure, heterotetramer of two alpha chains and two beta chains. In terms of tissue distribution, red blood cells.

Its function is as follows. Involved in oxygen transport from the lung to the various peripheral tissues. The polypeptide is Hemoglobin fetal subunit beta (Bos taurus (Bovine)).